Consider the following 183-residue polypeptide: Segregation and condensation protein B (183 aa).

This sequence belongs to the ScpB family. As to quaternary structure, homodimer. Homodimerization may be required to stabilize the binding of ScpA to the Smc head domains. Component of a cohesin-like complex composed of ScpA, ScpB and the Smc homodimer, in which ScpA and ScpB bind to the head domain of Smc. The presence of the three proteins is required for the association of the complex with DNA.

The protein localises to the cytoplasm. In terms of biological role, participates in chromosomal partition during cell division. May act via the formation of a condensin-like complex containing Smc and ScpA that pull DNA away from mid-cell into both cell halves. The protein is Segregation and condensation protein B of Streptococcus pyogenes serotype M1.